We begin with the raw amino-acid sequence, 494 residues long: MHASCCCAPPESVSHTRRISYKYSGTSYPTRTTTTSSSAPEFTNKKQSTAMAPTTAAAAASSNGGGESDGSSKEWRLTAPTRGGAMAAAGDKMSIRAVRYKISASVDDRGPRPVLPLAHGDPSVFPEFRTAAEAEDAVADALRSGDFNCYPAGVGLPAARRAVADHLSRDLPYKLSSDDIFLTAGGTQAIEVVISILAQPGTNILLPRPGYPNYEARAAFNNLEVRHFDLIPEKGWEIDLNSLESIADKNTTAIVIINPNNPCGNVYTYEHLSKVAEVARKLGILVITDEVYGNLVFGSSPFVPMGCFGHIVPILTIGSLSKRWIVPGWRLGWVAICDPKKTLQETKIATLITNFLNVSTDPATFIQGALPNILKNTKEEFFKRIIDLLTETSDICYRGIKDIKCITCPHKPEGSMFVMVKLNLYLLEGIHDDVDFCCQLAKEESVILCPGSVLGMKNWVRITFAIDSSSLLDGLERIKSFCQRHKKKNPLNYI.

Low complexity-rich tracts occupy residues 24 to 38 (SGTS…TSSS) and 48 to 62 (STAM…AASS). The disordered stretch occupies residues 24–76 (SGTSYPTRTTTTSSSAPEFTNKKQSTAMAPTTAAAAASSNGGGESDGSSKEWR). The residue at position 322 (K322) is an N6-(pyridoxal phosphate)lysine.

It belongs to the class-I pyridoxal-phosphate-dependent aminotransferase family. Pyridoxal 5'-phosphate serves as cofactor. As to expression, expressed in companion and pericycle cells adjacent to the protoxylem of roots. Expressed in companion cells of shoots.

The enzyme catalyses nicotianamine + 2-oxoglutarate = 3''-deamino-3''-oxonicotianamine + L-glutamate. Its function is as follows. Involved in biosynthesis of mugineic acid family phytosiderophores, which are ferric iron chelators produced in graminaceous plants in response to iron deficiency. The protein is Nicotianamine aminotransferase 1 of Oryza sativa subsp. japonica (Rice).